The following is a 989-amino-acid chain: Translation initiation factor IF-2 (989 aa).

Disordered regions lie at residues 28-60 (GVTKASEDDSLSETDKARLLDHLRKSHGSTDAD) and 97-397 (VRRD…DQNT). 2 stretches are compositionally biased toward basic and acidic residues: residues 40–60 (ETDKARLLDHLRKSHGSTDAD) and 122–178 (ELQR…EAAK). Over residues 182–223 (AAAAEAAAREQQTQASKPAQAAQPAAAKAEPVAAKAAEPVVA) the composition is skewed to low complexity. Positions 231–280 (ERAAAERAAQREAAKKAEDAARQAAEKARAEQEEIAKRRAAAEAEARAIR) are enriched in basic and acidic residues. The segment covering 318 to 345 (RPAGEAPARPAAKKPAAAAPAATTTPSA) has biased composition (low complexity). A compositionally biased stretch (gly residues) spans 374 to 387 (TSGGVDRGWRGGPK). Positions 489 to 658 (PRPPVVTVMG…LLQAEVLELK (170 aa)) constitute a tr-type G domain. Residues 498–505 (GHVDHGKT) are G1. Residue 498–505 (GHVDHGKT) participates in GTP binding. The G2 stretch occupies residues 523 to 527 (GITQH). The interval 544-547 (DTPG) is G3. GTP is bound by residues 544 to 548 (DTPGH) and 598 to 601 (NKID). The tract at residues 598-601 (NKID) is G4. A G5 region spans residues 634-636 (SAK).

The protein belongs to the TRAFAC class translation factor GTPase superfamily. Classic translation factor GTPase family. IF-2 subfamily.

It localises to the cytoplasm. Its function is as follows. One of the essential components for the initiation of protein synthesis. Protects formylmethionyl-tRNA from spontaneous hydrolysis and promotes its binding to the 30S ribosomal subunits. Also involved in the hydrolysis of GTP during the formation of the 70S ribosomal complex. The sequence is that of Translation initiation factor IF-2 from Paraburkholderia xenovorans (strain LB400).